A 220-amino-acid chain; its full sequence is Catechol O-methyltransferase (220 aa).

S-adenosyl-L-methionine contacts are provided by residues V44, E66, 68 to 69 (GT), S74, E92, and A121. Residue D139 participates in a divalent metal cation binding. D141 is a binding site for S-adenosyl-L-methionine. 2 residues coordinate a divalent metal cation: D165 and N166.

The protein belongs to the class I-like SAM-binding methyltransferase superfamily. Cation-dependent O-methyltransferase family. Homodimer. It depends on a divalent metal cation as a cofactor.

The catalysed reaction is a catechol + S-adenosyl-L-methionine = a guaiacol + S-adenosyl-L-homocysteine + H(+). Inhibited by EDTA. Its function is as follows. Catechol O-methyltransferase that can use various catechol-like compounds such as gallic acid (GA), 3,4-dihydroxy-5-methoxy-benzoic acid (5OMeBA), protocatechuic acid (PCA), 3,4-dihydroxy-benzaldehyde (DHA), dopamine, caffeic acid (CA), luteolin, quercetin, and 5-hydroxyuridine. The chain is Catechol O-methyltransferase from Mycobacterium tuberculosis (strain ATCC 25618 / H37Rv).